The sequence spans 91 residues: UPF0250 protein BB0170 (91 aa).

Belongs to the UPF0250 family.

This is UPF0250 protein BB0170 from Bordetella bronchiseptica (strain ATCC BAA-588 / NCTC 13252 / RB50) (Alcaligenes bronchisepticus).